The sequence spans 44 residues: Photosystem I reaction center subunit IX (44 aa).

Residues 9–29 (FMRSAPIVAAIWISLTAGIII) traverse the membrane as a helical segment.

It belongs to the PsaJ family.

It is found in the cellular thylakoid membrane. In terms of biological role, may help in the organization of the PsaE and PsaF subunits. The polypeptide is Photosystem I reaction center subunit IX (Prochlorococcus marinus (strain MIT 9515)).